We begin with the raw amino-acid sequence, 707 residues long: Polyribonucleotide nucleotidyltransferase (707 aa).

Mg(2+)-binding residues include Asp-484 and Asp-490. The 60-residue stretch at 551–610 (PRVVRMVVNPEKIRDIIGPAGKTITKIISETGVKIDIEEDGRLYITAPNLEAGERAKQMI) folds into the KH domain. Positions 620–688 (GGIYLGKVLR…KLGRIVLSRK (69 aa)) constitute an S1 motif domain. Positions 688-707 (KDAMPDEEESDNRKSDNRKK) are disordered. Basic and acidic residues predominate over residues 698–707 (DNRKSDNRKK).

Belongs to the polyribonucleotide nucleotidyltransferase family. Mg(2+) serves as cofactor.

It is found in the cytoplasm. The catalysed reaction is RNA(n+1) + phosphate = RNA(n) + a ribonucleoside 5'-diphosphate. Its function is as follows. Involved in mRNA degradation. Catalyzes the phosphorolysis of single-stranded polyribonucleotides processively in the 3'- to 5'-direction. In Caldanaerobacter subterraneus subsp. tengcongensis (strain DSM 15242 / JCM 11007 / NBRC 100824 / MB4) (Thermoanaerobacter tengcongensis), this protein is Polyribonucleotide nucleotidyltransferase.